A 915-amino-acid chain; its full sequence is Transferrin-binding protein A (915 aa).

An N-terminal signal peptide occupies residues 1 to 24 (MQQQHLFRFNILCLSLMTALPAYA). The Periplasmic portion of the chain corresponds to 25–187 (ENVQAGQAQE…ADDVIGEGRQ (163 aa)). The short motif at 38–45 (DTIQVKAK) is the TonB box element. The TBDR plug domain occupies 51–176 (RDNEVTGLGK…LAGSVAFQTK (126 aa)). A plug loop, interacts with transferrin region spans residues 121 to 139 (SYTAQAALGGTRTAGSSGA). Residues 187-915 (QWGIQSKTAY…NYTFSLEMKF (729 aa)) enclose the TBDR beta-barrel domain. A beta stranded transmembrane segment spans residues 188–197 (WGIQSKTAYS). Residues 198–203 (GKNRGL) are Extracellular-facing. A beta stranded membrane pass occupies residues 204–213 (TQSIALAGRI). Topologically, residues 214-215 (GG) are periplasmic. The chain crosses the membrane as a beta stranded span at residues 216–225 (AEALLIHTGR). Residues 226-309 (RAGEIRAHED…FLADPLSYES (84 aa)) lie on the Extracellular side of the membrane. Residues 310-319 (RSWLFRPGFR) form a beta stranded membrane-spanning segment. The Periplasmic portion of the chain corresponds to 320-324 (FENKR). A beta stranded membrane pass occupies residues 325–334 (HYIGGILEHT). At 335–406 (QQTFDTRDMT…VFYDETHTKS (72 aa)) the chain is on the extracellular side. The tract at residues 351–361 (KAVFDANKKQA) is L3 helix finger, interacts with transferrin. Residues 407 to 415 (RYGLEYVYT) traverse the membrane as a beta stranded segment. Residues 416–423 (NADKDTWA) are Periplasmic-facing. Residues 424 to 433 (DYARLSYDRQ) traverse the membrane as a beta stranded segment. The Extracellular segment spans residues 434 to 478 (GIGLDNHFQQTHCSADGSDKYCRPSADKPFSYYKSDRVIYGESHR). Residues 479–488 (LLQAAFKKSF) form a beta stranded membrane-spanning segment. The Periplasmic portion of the chain corresponds to 489 to 494 (DTAKIR). A beta stranded transmembrane segment spans residues 495–504 (HNLSVNLGFD). The Extracellular segment spans residues 505–583 (RFGSNLRHQD…PRSINGKSYY (79 aa)). The tract at residues 523–542 (AYSSNTPPQNNGKKISPNGS) is disordered. A beta stranded membrane pass occupies residues 584 to 592 (AAVRDNVRL). The Periplasmic portion of the chain corresponds to 593–594 (GR). A beta stranded membrane pass occupies residues 595 to 603 (WADVGAGLR). Residues 604-623 (YDYRSTHSDDGSVSTGTHRT) are Extracellular-facing. The chain crosses the membrane as a beta stranded span at residues 624-633 (LSWNAGIVLK). The Periplasmic segment spans residues 634 to 637 (PTDW). The beta stranded transmembrane segment at 638–647 (LDLTYRTSTG) threads the bilayer. Topologically, residues 648-675 (FRLPSFAEMYGWRAGVQSKAVKIDPEKS) are extracellular. Residues 676 to 685 (FNKEAGIVFK) form a beta stranded membrane-spanning segment. The Periplasmic segment spans residues 686 to 689 (GDFG). A beta stranded membrane pass occupies residues 690–699 (NLEASWFNNA). Residues 700-733 (YRDLIVRGYEAQIKDGKEEAKGDPAYLNAQSARI) are Extracellular-facing. Residues 734–743 (TGINILGKID) form a beta stranded membrane-spanning segment. Residues 744–755 (WNGVWDKLPEGW) lie on the Periplasmic side of the membrane. Residues 756-765 (YSTFAYNRVR) traverse the membrane as a beta stranded segment. At 766-790 (VRDIKKRADRTDIQSHLFDAIQPSR) the chain is on the extracellular side. Residues 791–799 (YVVGLGYDQ) traverse the membrane as a beta stranded segment. The Periplasmic portion of the chain corresponds to 800–802 (PEG). A beta stranded membrane pass occupies residues 803–811 (KWGVNGMLT). Residues 812-845 (YSKAKEITELLGSRALLNGNSRNTKATARRTRPW) are Extracellular-facing. The chain crosses the membrane as a beta stranded span at residues 846–855 (YIVDVSGYYT). At 856–860 (VKKHF) the chain is on the periplasmic side. The chain crosses the membrane as a beta stranded span at residues 861-870 (TLRAGVYNLL). Residues 871 to 905 (NYRYVTWENVRQTAGGAVNQHKNVGVYNRYAAPGR) are Extracellular-facing. The TonB C-terminal box motif lies at 898–915 (NRYAAPGRNYTFSLEMKF). Residues 906 to 915 (NYTFSLEMKF) form a beta stranded membrane-spanning segment.

Belongs to the TonB-dependent receptor family. As to quaternary structure, binds both human apo- and holo-transferrin (TF), via the TF C-terminus. Forms a large complex with TF and TbpB.

The protein localises to the cell outer membrane. Neisseria acquires iron by extracting it from serum transferrin (TF) in its human host. Acts as a TF receptor and is required for TF utilization. Binds both apo- and holo-TF, via the TF C-terminus. This chain is Transferrin-binding protein A, found in Neisseria meningitidis serogroup B (strain ATCC BAA-335 / MC58).